The chain runs to 197 residues: Holliday junction branch migration complex subunit RuvA (197 aa).

The segment at 1-63 (MIEFIRGYVD…EDVLALYGFH (63 aa)) is domain I. Residues 64-142 (TRQERMLFAK…AIVPDAFPNL (79 aa)) are domain II. Residues 143–149 (FTEPLEE) form a flexible linker region. Positions 149 to 197 (ETNALSEAIEALKALGYADKEIQKVVPMLRQERLSTEGYIKLALQKLLK) are domain III.

This sequence belongs to the RuvA family. In terms of assembly, homotetramer. Forms an RuvA(8)-RuvB(12)-Holliday junction (HJ) complex. HJ DNA is sandwiched between 2 RuvA tetramers; dsDNA enters through RuvA and exits via RuvB. An RuvB hexamer assembles on each DNA strand where it exits the tetramer. Each RuvB hexamer is contacted by two RuvA subunits (via domain III) on 2 adjacent RuvB subunits; this complex drives branch migration. In the full resolvosome a probable DNA-RuvA(4)-RuvB(12)-RuvC(2) complex forms which resolves the HJ.

It localises to the cytoplasm. In terms of biological role, the RuvA-RuvB-RuvC complex processes Holliday junction (HJ) DNA during genetic recombination and DNA repair, while the RuvA-RuvB complex plays an important role in the rescue of blocked DNA replication forks via replication fork reversal (RFR). RuvA specifically binds to HJ cruciform DNA, conferring on it an open structure. The RuvB hexamer acts as an ATP-dependent pump, pulling dsDNA into and through the RuvAB complex. HJ branch migration allows RuvC to scan DNA until it finds its consensus sequence, where it cleaves and resolves the cruciform DNA. The polypeptide is Holliday junction branch migration complex subunit RuvA (Anoxybacillus flavithermus (strain DSM 21510 / WK1)).